We begin with the raw amino-acid sequence, 738 residues long: Catalase-peroxidase (738 aa).

Positions 1-24 (MSEEHPPIAEANSQPSNGCPVAGG) are disordered. The segment at residues 108–231 (WHAAGTYRVG…LAAVQMGLIY (124 aa)) is a cross-link (tryptophyl-tyrosyl-methioninium (Trp-Tyr) (with M-257)). The Proton acceptor role is filled by His-109. The segment at residues 231–257 (YVNPEGPNGNPDPLAAAIDIRETFGRM) is a cross-link (tryptophyl-tyrosyl-methioninium (Tyr-Met) (with W-108)). His-272 contributes to the heme b binding site.

It belongs to the peroxidase family. Peroxidase/catalase subfamily. In terms of assembly, homodimer or homotetramer. Heme b is required as a cofactor. In terms of processing, formation of the three residue Trp-Tyr-Met cross-link is important for the catalase, but not the peroxidase activity of the enzyme.

The enzyme catalyses H2O2 + AH2 = A + 2 H2O. It carries out the reaction 2 H2O2 = O2 + 2 H2O. Its function is as follows. Bifunctional enzyme with both catalase and broad-spectrum peroxidase activity. The chain is Catalase-peroxidase from Mycobacteroides abscessus (strain ATCC 19977 / DSM 44196 / CCUG 20993 / CIP 104536 / JCM 13569 / NCTC 13031 / TMC 1543 / L948) (Mycobacterium abscessus).